A 682-amino-acid polypeptide reads, in one-letter code: Potassium-transporting ATPase ATP-binding subunit (682 aa).

4 helical membrane-spanning segments follow: residues 34-54 (PVMF…IAMA), 62-82 (ALFS…ANFA), 219-239 (IALT…TATL), and 254-274 (VLVA…LSAI). The active-site 4-aspartylphosphate intermediate is Asp-307. ATP-binding positions include Asp-344, Glu-348, 377–384 (FTAQSRMS), and Lys-395. Mg(2+)-binding residues include Asp-518 and Asp-522. The next 3 membrane-spanning stretches (helical) occupy residues 588-608 (FAII…LNIM), 616-636 (AILS…PLAL), and 656-676 (IYGL…DLLL).

The protein belongs to the cation transport ATPase (P-type) (TC 3.A.3) family. Type IA subfamily. The system is composed of three essential subunits: KdpA, KdpB and KdpC.

It localises to the cell inner membrane. The catalysed reaction is K(+)(out) + ATP + H2O = K(+)(in) + ADP + phosphate + H(+). Its function is as follows. Part of the high-affinity ATP-driven potassium transport (or Kdp) system, which catalyzes the hydrolysis of ATP coupled with the electrogenic transport of potassium into the cytoplasm. This subunit is responsible for energy coupling to the transport system and for the release of the potassium ions to the cytoplasm. The sequence is that of Potassium-transporting ATPase ATP-binding subunit from Escherichia coli (strain SMS-3-5 / SECEC).